The primary structure comprises 274 residues: Large ribosomal subunit protein uL2 (274 aa).

The interval 223 to 256 (VAMNPVDHPHGGGEGRTSGGRHPVTPWGIPTKGY) is disordered.

It belongs to the universal ribosomal protein uL2 family. Part of the 50S ribosomal subunit. Forms a bridge to the 30S subunit in the 70S ribosome.

Its function is as follows. One of the primary rRNA binding proteins. Required for association of the 30S and 50S subunits to form the 70S ribosome, for tRNA binding and peptide bond formation. It has been suggested to have peptidyltransferase activity; this is somewhat controversial. Makes several contacts with the 16S rRNA in the 70S ribosome. In Trichlorobacter lovleyi (strain ATCC BAA-1151 / DSM 17278 / SZ) (Geobacter lovleyi), this protein is Large ribosomal subunit protein uL2.